The sequence spans 111 residues: UPF0145 protein BRADO6695 (111 aa).

It belongs to the UPF0145 family.

The polypeptide is UPF0145 protein BRADO6695 (Bradyrhizobium sp. (strain ORS 278)).